A 226-amino-acid polypeptide reads, in one-letter code: MKAIRIAIDGPASSGKSTVAKIIAKNLGYTYLDTGAMYRSATYIALKNGYHKEDVNLILQELAKRPISFKKAADGSQLVFLGDQDVTMAIRQNDVTNNVSWVSALPEIREELVNQQRRIARTGAIIMDGRDIGTVVLPDAELKIFLIASVEERAQRRYQENIEKGIAADFDTLKAEIAARDYKDSHRQVSPLKAADDAIIFDTTGITISAVVQFIQEKAEKIIDMA.

10 to 18 serves as a coordination point for ATP; that stretch reads GPASSGKST.

This sequence belongs to the cytidylate kinase family. Type 1 subfamily.

The protein localises to the cytoplasm. The catalysed reaction is CMP + ATP = CDP + ADP. It carries out the reaction dCMP + ATP = dCDP + ADP. This Streptococcus equi subsp. equi (strain 4047) protein is Cytidylate kinase.